The chain runs to 585 residues: ATP-dependent lipid A-core flippase (585 aa).

6 helical membrane-spanning segments follow: residues 25–45 (FLAA…FPAI), 63–83 (WLFY…FGFL), 127–146 (IAYD…TSLI), 150–170 (LSIV…TLIT), 250–270 (QSPL…GVAL), and 277–297 (QTTV…MAPL). The ABC transmembrane type-1 domain maps to 26 to 309 (LAALACMGVA…VTDVNAPIQR (284 aa)). The ABC transporter domain occupies 341–577 (VEFDGVTFTY…DGLYARLYRM (237 aa)). An ATP-binding site is contributed by 375 to 382 (GPSGSGKT).

This sequence belongs to the ABC transporter superfamily. Lipid exporter (TC 3.A.1.106) family. Homodimer.

The protein localises to the cell inner membrane. It catalyses the reaction ATP + H2O + lipid A-core oligosaccharideSide 1 = ADP + phosphate + lipid A-core oligosaccharideSide 2.. Its function is as follows. Involved in lipopolysaccharide (LPS) biosynthesis. Translocates lipid A-core from the inner to the outer leaflet of the inner membrane. Transmembrane domains (TMD) form a pore in the inner membrane and the ATP-binding domain (NBD) is responsible for energy generation. The protein is ATP-dependent lipid A-core flippase of Dechloromonas aromatica (strain RCB).